A 301-amino-acid polypeptide reads, in one-letter code: Ribonuclease Z (301 aa).

The Zn(2+) site is built by His61, His63, Asp65, His66, His140, Asp211, and His269. The active-site Proton acceptor is Asp65.

This sequence belongs to the RNase Z family. As to quaternary structure, homodimer. The cofactor is Zn(2+).

The catalysed reaction is Endonucleolytic cleavage of RNA, removing extra 3' nucleotides from tRNA precursor, generating 3' termini of tRNAs. A 3'-hydroxy group is left at the tRNA terminus and a 5'-phosphoryl group is left at the trailer molecule.. In terms of biological role, zinc phosphodiesterase, which displays some tRNA 3'-processing endonuclease activity. Probably involved in tRNA maturation, by removing a 3'-trailer from precursor tRNA. This chain is Ribonuclease Z, found in Bradyrhizobium diazoefficiens (strain JCM 10833 / BCRC 13528 / IAM 13628 / NBRC 14792 / USDA 110).